Reading from the N-terminus, the 202-residue chain is Alpha-latrotoxin-Lm1a (202 aa).

ANK repeat units follow at residues 95 to 109, 110 to 120, 122 to 132, 133 to 138, 142 to 161, 163 to 170, 171 to 182, lysine 184, 185 to 191, and 193 to 202; these read LYNA…VGFK, LMESPEININE, NDWPVASTLLR, SSNVNV, NSDT…DINT, NGHLNIVK, YLVEEEDLSVDG, YGIDMTI, and TALDIATDLK. The segment at 175 to 181 is 4C4.1 epitope; that stretch reads EEDLSVD.

Belongs to the cationic peptide 01 (latrotoxin) family. 03 (alpha-latrotoxin) subfamily. As to quaternary structure, homotetramer in membranes. Processed by furin-like proteases at both the N- and C-termini. In terms of processing, contains 1 disulfide bond. Expressed in venom gland, cephalothorax, and abdomen tissues from both males and females.

It localises to the secreted. The protein localises to the target cell membrane. Its function is as follows. Presynaptic neurotoxin that causes massive release of neurotransmitters from vertebrate (but not invertebrate) nerve terminals and endocrine cells via a complex mechanism involving activation of receptor(s) and toxin insertion into the plasma membrane with subsequent pore formation. Binds to neurexin-1-alpha (NRXN1) in a calcium dependent manner, adhesion G protein-coupled receptor L1 (ADGRL1, also termed latrophilin-1 and calcium-independent receptor of latrotoxin (CIRL)), and receptor-type tyrosine-protein phosphatase S (PTPRS), also termed PTP sigma. NRXN1 and PTPRS are suggested to provide a platform for binding and subsequent pore formation events. In contrast, binding to ADGRL1 does not involve oligomerization and channel formation, but direct downstream stimulation of the synaptic fusion machinery. This is Alpha-latrotoxin-Lm1a from Latrodectus mactans (Black widow spider).